A 430-amino-acid chain; its full sequence is Immunoglobulin heavy constant delta (430 aa).

The Extracellular portion of the chain corresponds to 1-406 (APTKAPDVFP…FDDVGSLWTT (406 aa)). The Ig-like 1 domain maps to 6–98 (PDVFPIISGC…TASKSKKEIF (93 aa)). A disulfide bridge connects residues C28 and C84. The tract at residues 96 to 167 (EIFRWPESPK…TPECPSHTQP (72 aa)) is disordered. Polar residues predominate over residues 106–118 (AQASSVPTAQPQA). 2 O-linked (GalNAc...) serine glycosylation sites follow: S109 and S110. T113, T126, T127, T131, and T132 each carry an O-linked (GalNAc...) threonine glycan. The segment covering 138-158 (GGEEKKKEKEKEEQEERETKT) has biased composition (basic and acidic residues). Ig-like domains follow at residues 175–263 (PAVQ…RLMA) and 267–373 (PAAQ…RSLE). 2 disulfide bridges follow: C190/C249 and C294/C355. 3 N-linked (GlcNAc...) asparagine glycosylation sites follow: N225, N316, and N367. The chain crosses the membrane as a helical span at residues 407–427 (LSTFVALFILTLLYSGIVTFI). Over 428-430 (KVK) the chain is Cytoplasmic.

In terms of assembly, immunoglobulins are composed of two identical heavy chains and two identical light chains; disulfide-linked. An IgD molecule contains thus a delta heavy chain combined with either a kappa or a lambda light chains. Kappa light chains are found predominantly on the membrane IgD (mIgD) form and lambda on the secreted IgD (sIgD) form, this fact is poorly understood. Membrane-bound IgD molecules are non-covalently associated with a heterodimer of CD79A and CD79B.

The protein resides in the secreted. Its subcellular location is the cell membrane. Its function is as follows. Constant region of immunoglobulin heavy chains. Immunoglobulins, also known as antibodies, are membrane-bound or secreted glycoproteins produced by B lymphocytes. In the recognition phase of humoral immunity, the membrane-bound immunoglobulins serve as receptors which, upon binding of a specific antigen, trigger the clonal expansion and differentiation of B lymphocytes into immunoglobulins-secreting plasma cells. Secreted immunoglobulins mediate the effector phase of humoral immunity, which results in the elimination of bound antigens. The antigen binding site is formed by the variable domain of one heavy chain, together with that of its associated light chain. Thus, each immunoglobulin has two antigen binding sites with remarkable affinity for a particular antigen. The variable domains are assembled by a process called V-(D)-J rearrangement and can then be subjected to somatic hypermutations which, after exposure to antigen and selection, allow affinity maturation for a particular antigen. IgD is the major antigen receptor isotype on the surface of most peripheral B-cells, where it is coexpressed with IgM. The membrane-bound IgD (mIgD) induces the phosphorylation of CD79A and CD79B by the Src family of protein tyrosine kinases. Soluble IgD (sIgD) concentration in serum below those of IgG, IgA, and IgM but much higher than that of IgE. IgM and IgD molecules present on B cells have identical V regions and antigen-binding sites. After the antigen binds to the B-cell receptor, the secreted form sIgD is shut off. IgD is a potent inducer of TNF, IL1B, and IL1RN. IgD also induces release of IL6, IL10, and LIF from peripheral blood mononuclear cells. Monocytes seem to be the main producers of cytokines in vitro in the presence of IgD. The chain is Immunoglobulin heavy constant delta from Homo sapiens (Human).